The chain runs to 305 residues: Ribonuclease BN (305 aa).

H64, H66, D68, H69, H141, D212, and H270 together coordinate Zn(2+). D68 acts as the Proton acceptor in catalysis.

This sequence belongs to the RNase Z family. RNase BN subfamily. As to quaternary structure, homodimer. Zn(2+) is required as a cofactor.

In terms of biological role, zinc phosphodiesterase, which has both exoribonuclease and endoribonuclease activities. This chain is Ribonuclease BN, found in Shigella flexneri.